Here is a 176-residue protein sequence, read N- to C-terminus: Ribosome maturation factor RimM (176 aa).

Positions 92-165 (EDEFLYSDLI…RLVVVPPVYA (74 aa)) constitute a PRC barrel domain.

Belongs to the RimM family. In terms of assembly, binds ribosomal protein uS19.

The protein localises to the cytoplasm. Its function is as follows. An accessory protein needed during the final step in the assembly of 30S ribosomal subunit, possibly for assembly of the head region. Essential for efficient processing of 16S rRNA. May be needed both before and after RbfA during the maturation of 16S rRNA. It has affinity for free ribosomal 30S subunits but not for 70S ribosomes. This Paramagnetospirillum magneticum (strain ATCC 700264 / AMB-1) (Magnetospirillum magneticum) protein is Ribosome maturation factor RimM.